The chain runs to 247 residues: PsbP domain-containing protein 3, chloroplastic (247 aa).

Residues 1–26 constitute a chloroplast transit peptide; it reads MAAISPWLSSPQSFSNPRVTITDSRR. The transit peptide at 27–80 directs the protein to the thylakoid; it reads CSSISAAISVLDSSNEEQHRISSRDHVGMKRRDVMLQIASSVFFLPLAISPAFA.

The protein belongs to the PsbP family.

The protein localises to the plastid. It is found in the chloroplast thylakoid lumen. This is PsbP domain-containing protein 3, chloroplastic (PPD3) from Arabidopsis thaliana (Mouse-ear cress).